A 710-amino-acid chain; its full sequence is Solute carrier organic anion transporter family member 3A1 (710 aa).

An N-acetylmethionine modification is found at Met1. The segment at Met1–Arg25 is disordered. The Cytoplasmic portion of the chain corresponds to Met1–Lys40. A helical membrane pass occupies residues Ile41 to Leu60. Over Val61 to Gly79 the chain is Extracellular. The chain crosses the membrane as a helical span at residues Val80–Gly100. Over Ala101–Pro106 the chain is Cytoplasmic. A helical transmembrane segment spans residues Arg107 to His131. Over Gln132–Asn174 the chain is Extracellular. An N-linked (GlcNAc...) asparagine glycan is attached at Asn153. A helical membrane pass occupies residues Met175 to Asp203. Residues Asp204 to Leu222 are Cytoplasmic-facing. A helical membrane pass occupies residues Val223 to Ala243. Residues Val244–Ile261 are Extracellular-facing. The helical transmembrane segment at Gly262–Pro286 threads the bilayer. Topologically, residues Gln287–His344 are cytoplasmic. A helical transmembrane segment spans residues Leu345–Ala366. The Extracellular portion of the chain corresponds to Gly367 to Ser386. N-linked (GlcNAc...) asparagine glycosylation is present at Asn381. A helical transmembrane segment spans residues Ala387–Val410. Topologically, residues Lys411–Ser414 are cytoplasmic. The helical transmembrane segment at Leu415–Phe438 threads the bilayer. Residues Leu439 to Phe539 lie on the Extracellular side of the membrane. Asn457 is a glycosylation site (N-linked (GlcNAc...) asparagine). The 49-residue stretch at Leu465–Met513 folds into the Kazal-like domain. 3 cysteine pairs are disulfide-bonded: Cys471–Cys501, Cys477–Cys497, and Cys486–Cys511. Asn502, Asn505, and Asn519 each carry an N-linked (GlcNAc...) asparagine glycan. Residues Leu540–Ile562 form a helical membrane-spanning segment. Over Arg563 to Ser571 the chain is Cytoplasmic. A helical transmembrane segment spans residues Tyr572–Ile597. Over Asp598 to Ala630 the chain is Extracellular. A helical transmembrane segment spans residues Ile631–Leu648. The Cytoplasmic segment spans residues Arg649–Asn705.

This sequence belongs to the organo anion transporter (TC 2.A.60) family.

The protein resides in the basolateral cell membrane. The protein localises to the apical cell membrane. It is found in the basal cell membrane. The enzyme catalyses L-thyroxine(out) = L-thyroxine(in). The catalysed reaction is prostaglandin E1(out) = prostaglandin E1(in). It catalyses the reaction prostaglandin E2(out) = prostaglandin E2(in). It carries out the reaction prostaglandin F2alpha(out) = prostaglandin F2alpha(in). The enzyme catalyses (5Z,8Z,11Z,14Z)-eicosatetraenoate(out) = (5Z,8Z,11Z,14Z)-eicosatetraenoate(in). The catalysed reaction is taurocholate(out) = taurocholate(in). It catalyses the reaction glycocholate(out) = glycocholate(in). It carries out the reaction estrone 3-sulfate(out) = estrone 3-sulfate(in). The enzyme catalyses argipressin(out) = argipressin(in). In terms of biological role, putative organic anion antiporter with apparent broad substrate specificity. Recognizes various substrates including thyroid hormone L-thyroxine, prostanoids such as prostaglandin E1 and E2, bile acids such as taurocholate, glycolate and glycochenodeoxycholate and peptide hormones such as L-arginine vasopressin, likely operating in a tissue-specific manner. The transport mechanism, its electrogenicity and potential tissue-specific counterions remain to be elucidated. This Bos taurus (Bovine) protein is Solute carrier organic anion transporter family member 3A1 (SLCO3A1).